A 397-amino-acid polypeptide reads, in one-letter code: Phosphoglycerate kinase (397 aa).

Substrate contacts are provided by residues 21-23 (DVN), Arg36, 59-62 (HFGR), Arg119, and Arg152. Residues Lys202, Glu324, and 354–357 (GGDT) each bind ATP.

It belongs to the phosphoglycerate kinase family. In terms of assembly, monomer.

It is found in the cytoplasm. The catalysed reaction is (2R)-3-phosphoglycerate + ATP = (2R)-3-phospho-glyceroyl phosphate + ADP. It functions in the pathway carbohydrate degradation; glycolysis; pyruvate from D-glyceraldehyde 3-phosphate: step 2/5. The polypeptide is Phosphoglycerate kinase (Cereibacter sphaeroides (strain ATCC 17029 / ATH 2.4.9) (Rhodobacter sphaeroides)).